The primary structure comprises 489 residues: Adenosylhomocysteinase (489 aa).

Positions 68, 151, and 213 each coordinate substrate. 214–216 (TTT) contacts NAD(+). 2 residues coordinate substrate: lysine 243 and aspartate 247. NAD(+) is bound by residues asparagine 248, 277-282 (GYGDVG), glutamate 300, asparagine 335, 356-358 (IGH), and asparagine 403.

It belongs to the adenosylhomocysteinase family. It depends on NAD(+) as a cofactor.

It is found in the cytoplasm. The enzyme catalyses S-adenosyl-L-homocysteine + H2O = L-homocysteine + adenosine. It participates in amino-acid biosynthesis; L-homocysteine biosynthesis; L-homocysteine from S-adenosyl-L-homocysteine: step 1/1. May play a key role in the regulation of the intracellular concentration of adenosylhomocysteine. The polypeptide is Adenosylhomocysteinase (Mycobacterium sp. (strain KMS)).